The sequence spans 202 residues: Probable WRKY transcription factor 59 (202 aa).

Residues 103-168 (DEKVALDDGY…YEGRHNHPSP (66 aa)) constitute a DNA-binding region (WRKY).

It belongs to the WRKY group II-c family.

Its subcellular location is the nucleus. Transcription factor. Interacts specifically with the W box (5'-(T)TGAC[CT]-3'), a frequently occurring elicitor-responsive cis-acting element. This chain is Probable WRKY transcription factor 59 (WRKY59), found in Arabidopsis thaliana (Mouse-ear cress).